The chain runs to 224 residues: Casparian strip membrane protein 1 (224 aa).

The interval 1–22 is disordered; sequence MSSGEPAAVSIPIHDHHGKAPA. The Cytoplasmic portion of the chain corresponds to 1-62; the sequence is MSSGEPAAVS…RGDHHRGSRC (62 aa). Residues 63 to 83 form a helical membrane-spanning segment; it reads LAFLDFILRIAAFGPALAAAI. At 84–110 the chain is on the extracellular side; it reads STGTSDETLSVFTEFYQFRARFDDFPA. The helical transmembrane segment at 111 to 131 threads the bilayer; that stretch reads FLFFLVANAIVAGYLVLSLPF. The Cytoplasmic portion of the chain corresponds to 132–145; that stretch reads SAVLVIRPQTIGLR. Residues 146-166 form a helical membrane-spanning segment; that stretch reads LLLLVCDMIMAAMLTAAASAA. Topologically, residues 167–200 are extracellular; sequence AAIVDLAHNGNLRANWVAICMQFHGFCQRTSGSV. Residues 201–221 form a helical membrane-spanning segment; it reads VASFLTVVILMFLVILAACSI. Over 222–224 the chain is Cytoplasmic; that stretch reads RKR.

It belongs to the Casparian strip membrane proteins (CASP) family. As to quaternary structure, homodimer and heterodimers.

Its subcellular location is the cell membrane. Its function is as follows. Regulates membrane-cell wall junctions and localized cell wall deposition. Required for establishment of the Casparian strip membrane domain (CSD) and the subsequent formation of Casparian strips, a cell wall modification of the root endodermis that determines an apoplastic barrier between the intraorganismal apoplasm and the extraorganismal apoplasm and prevents lateral diffusion. The protein is Casparian strip membrane protein 1 of Oryza sativa subsp. indica (Rice).